The chain runs to 244 residues: Small ribosomal subunit protein uS2 (244 aa).

Belongs to the universal ribosomal protein uS2 family.

This is Small ribosomal subunit protein uS2 from Buchnera aphidicola subsp. Acyrthosiphon pisum (strain 5A).